Reading from the N-terminus, the 1046-residue chain is UDP-N-acetylglucosamine--peptide N-acetylglucosaminyltransferase 110 kDa subunit (1046 aa).

N-acetylalanine is present on alanine 2. A phosphoserine; by GSK3-beta; alternate mark is found at serine 3 and serine 4. Serine 3 and serine 4 each carry an O-linked (GlcNAc) serine; alternate glycan. Position 20 is a phosphoserine (serine 20). TPR repeat units follow at residues 21–54, 89–122, 123–156, 157–190, 191–224, 225–258, 259–292, 293–326, 327–360, 361–394, 395–428, and 429–462; these read FQGLAELAHREYQAGDFEAAERHCMQLWRQEPDN, AEAYSNLGNVYKERGQLQEAIEHYRHALRLKPDF, IDGYINLAAALVAAGDMEGAVQAYVSALQYNPDL, YCVRSDLGNLLKALGRLEEAKACYLKAIETQPNF, AVAWSNLGCVFNAQGEIWLAIHHFEKAVTLDPNF, LDAYINLGNVLKEARIFDRAVAAYLRALSLSPNH, AVVHGNLACVYYEQGLIDLAIDTYRRAIELQPHF, PDAYCNLANALKEKGSVAEAEDCYNTALRLCPTH, ADSLNNLANIKREQGNIEEAVRLYRKALEVFPEF, AAAHSNLASVLQQQGKLQEALMHYKEAIRISPTF, ADAYSNMGNTLKEMQDVQGALQCYTRAIQINPAF, and ADAHSNLASIHKDSGNIPEAIASYRTALKLKPDF. An O-linked (GlcNAc) serine; by autocatalysis glycan is attached at serine 399. Residue threonine 454 is modified to Phosphothreonine. One copy of the TPR 13; truncated repeat lies at 463–473; that stretch reads PDAYCNLAHCL. The short motif at 464 to 466 is the DFP motif element; that stretch reads DAY. Positions 487–503 match the Nuclear localization signal motif; that stretch reads KKLVSIVADQLEKNRLP. The Proton acceptor role is filled by histidine 508. UDP-binding positions include glutamine 849, lysine 852, 906–908, 911–914, 930–932, and aspartate 935; these read APK, HVRR, and HTT. The residue at position 989 (tyrosine 989) is a Phosphotyrosine. A required for phosphatidylinositol 3,4,5-triphosphate binding region spans residues 991 to 1010; that stretch reads KKIRGKVWKQRISSPLFNTK.

This sequence belongs to the glycosyltransferase 41 family. O-GlcNAc transferase subfamily. As to quaternary structure, monomer; may exist in different oligomerization states in cells. Homotrimer, oligomerizes via TPR repeats 6 and 7. Trimerization is not necessary for activity in vitro, however it increases affinity for UDP-GlcNAc. Component of a THAP1/THAP3-HCFC1-OGT complex. Component of the NSL complex at least composed of MOF/KAT8, KANSL1, KANSL2, KANSL3, MCRS1, PHF20, OGT1/OGT, WDR5 and HCFC1. Found in a complex with KIF5B, RHOT1, RHOT2 and TRAK1. Found in a complex composed of at least SINHCAF, SIN3A, HDAC1, SAP30, RBBP4, OGT and TET1. Component of a complex composed of KMT2E/MLL5, OGT and USP7; the complex stabilizes KMT2E/MLL5, preventing KMT2E/MLL5 ubiquitination and proteasomal-mediated degradation. Interacts (via TPRs 1-6) with SIN3A; the interaction mediates transcriptional repression in parallel with histone deacetylase. Interacts (via TPR 5-6) with TET1, TET2 and TET3. Interacts (via TPR repeats 6 and 7) with ATXN10. Interacts with NSD2. Interacts with PROSER1; this interaction mediates TET2 O-GlcNAcylation and stability by promoting the interaction between OGT and TET2. In terms of processing, ubiquitinated by the SCF(FBXO31) complex, leading to its proteasomal degradation. Post-translationally, phosphorylation on Ser-3 or Ser-4 by GSK3-beta positively regulates its activity. Phosphorylation at Thr-454 by AMPK promotes nuclear localization. Glycosylated via autocatalysis; O-GlcNAcylation at Ser-399 promotes nuclear localization.

It is found in the nucleus. It localises to the cytoplasm. The catalysed reaction is L-seryl-[protein] + UDP-N-acetyl-alpha-D-glucosamine = 3-O-(N-acetyl-beta-D-glucosaminyl)-L-seryl-[protein] + UDP + H(+). It catalyses the reaction L-threonyl-[protein] + UDP-N-acetyl-alpha-D-glucosamine = 3-O-(N-acetyl-beta-D-glucosaminyl)-L-threonyl-[protein] + UDP + H(+). Its pathway is protein modification; protein glycosylation. With respect to regulation, subject to product inhibition by UDP. Its function is as follows. Catalyzes the transfer of a single N-acetylglucosamine from UDP-GlcNAc to a serine or threonine residue in cytoplasmic and nuclear proteins resulting in their modification with a beta-linked N-acetylglucosamine (O-GlcNAc). Glycosylates a large and diverse number of proteins including histone H2B, AKT1, AMPK, ATG4B, CAPRIN1, EZH2, FNIP1, GSDMD, KRT7, LMNA, LMNB1, LMNB2, RPTOR, HOXA1, PFKL, KMT2E/MLL5, MAPT/TAU, TET2, RBL2, RET, NOD2 and HCFC1. Can regulate their cellular processes via cross-talk between glycosylation and phosphorylation or by affecting proteolytic processing. Involved in insulin resistance in muscle and adipocyte cells via glycosylating insulin signaling components and inhibiting the 'Thr-308' phosphorylation of AKT1, enhancing IRS1 phosphorylation and attenuating insulin signaling. Involved in glycolysis regulation by mediating glycosylation of 6-phosphofructokinase PFKL, inhibiting its activity. Plays a key role in chromatin structure by mediating O-GlcNAcylation of 'Ser-112' of histone H2B: recruited to CpG-rich transcription start sites of active genes via its interaction with TET proteins (TET1, TET2 or TET3). As part of the NSL complex indirectly involved in acetylation of nucleosomal histone H4 on several lysine residues. O-GlcNAcylation of 'Ser-75' of EZH2 increases its stability, and facilitating the formation of H3K27me3 by the PRC2/EED-EZH2 complex. Stabilizes KMT2E/MLL5 by mediating its glycosylation, thereby preventing KMT2E/MLL5 ubiquitination. Regulates circadian oscillation of the clock genes and glucose homeostasis in the liver. Stabilizes clock proteins BMAL1 and CLOCK through O-glycosylation, which prevents their ubiquitination and subsequent degradation. Promotes the CLOCK-BMAL1-mediated transcription of genes in the negative loop of the circadian clock such as PER1/2 and CRY1/2. O-glycosylates HCFC1 and regulates its proteolytic processing and transcriptional activity. Component of a THAP1/THAP3-HCFC1-OGT complex that is required for the regulation of the transcriptional activity of RRM1. Regulates mitochondrial motility in neurons by mediating glycosylation of TRAK1. Promotes autophagy by mediating O-glycosylation of ATG4B. Acts as a regulator of mTORC1 signaling by mediating O-glycosylation of RPTOR and FNIP1: O-GlcNAcylation of RPTOR in response to glucose sufficiency promotes activation of the mTORC1 complex. This chain is UDP-N-acetylglucosamine--peptide N-acetylglucosaminyltransferase 110 kDa subunit (OGT), found in Sus scrofa (Pig).